The primary structure comprises 262 residues: Acyl-[acyl-carrier-protein]--UDP-N-acetylglucosamine O-acyltransferase (262 aa).

Belongs to the transferase hexapeptide repeat family. LpxA subfamily. In terms of assembly, homotrimer.

The protein resides in the cytoplasm. The catalysed reaction is a (3R)-hydroxyacyl-[ACP] + UDP-N-acetyl-alpha-D-glucosamine = a UDP-3-O-[(3R)-3-hydroxyacyl]-N-acetyl-alpha-D-glucosamine + holo-[ACP]. It participates in glycolipid biosynthesis; lipid IV(A) biosynthesis; lipid IV(A) from (3R)-3-hydroxytetradecanoyl-[acyl-carrier-protein] and UDP-N-acetyl-alpha-D-glucosamine: step 1/6. Functionally, involved in the biosynthesis of lipid A, a phosphorylated glycolipid that anchors the lipopolysaccharide to the outer membrane of the cell. The chain is Acyl-[acyl-carrier-protein]--UDP-N-acetylglucosamine O-acyltransferase from Paraburkholderia phytofirmans (strain DSM 17436 / LMG 22146 / PsJN) (Burkholderia phytofirmans).